A 465-amino-acid chain; its full sequence is tRNA-2-methylthio-N(6)-dimethylallyladenosine synthase (465 aa).

In terms of domain architecture, MTTase N-terminal spans 26–141; that stretch reads MRAHIITYGC…LPEALKANER (116 aa). Residues Cys35, Cys71, Cys104, Cys173, Cys177, and Cys180 each contribute to the [4Fe-4S] cluster site. The Radical SAM core domain occupies 159–388; the sequence is PKGALSAHVT…IEKQKEWSYR (230 aa). One can recognise a TRAM domain in the interval 391 to 453; sequence LEWVGKTVEV…PHLLFGEVVG (63 aa).

It belongs to the methylthiotransferase family. MiaB subfamily. In terms of assembly, monomer. [4Fe-4S] cluster serves as cofactor.

The protein localises to the cytoplasm. The catalysed reaction is N(6)-dimethylallyladenosine(37) in tRNA + (sulfur carrier)-SH + AH2 + 2 S-adenosyl-L-methionine = 2-methylsulfanyl-N(6)-dimethylallyladenosine(37) in tRNA + (sulfur carrier)-H + 5'-deoxyadenosine + L-methionine + A + S-adenosyl-L-homocysteine + 2 H(+). Catalyzes the methylthiolation of N6-(dimethylallyl)adenosine (i(6)A), leading to the formation of 2-methylthio-N6-(dimethylallyl)adenosine (ms(2)i(6)A) at position 37 in tRNAs that read codons beginning with uridine. This is tRNA-2-methylthio-N(6)-dimethylallyladenosine synthase from Thermus thermophilus (strain ATCC 27634 / DSM 579 / HB8).